The sequence spans 318 residues: Homoserine kinase (318 aa).

97-107 serves as a coordination point for ATP; the sequence is PIGSGLGSSAC.

The protein belongs to the GHMP kinase family. Homoserine kinase subfamily.

Its subcellular location is the cytoplasm. The catalysed reaction is L-homoserine + ATP = O-phospho-L-homoserine + ADP + H(+). Its pathway is amino-acid biosynthesis; L-threonine biosynthesis; L-threonine from L-aspartate: step 4/5. In terms of biological role, catalyzes the ATP-dependent phosphorylation of L-homoserine to L-homoserine phosphate. This Photobacterium profundum (strain SS9) protein is Homoserine kinase.